We begin with the raw amino-acid sequence, 344 residues long: Fe-S cluster assembly protein DRE2 (344 aa).

The interval 1–160 is N-terminal SAM-like domain; sequence MTSNILLLLH…KKLNNDNAST (160 aa). Residues 154–179 are disordered; sequence NNDNASTPGLTDSSAGTSEDETATVS. A compositionally biased stretch (polar residues) spans 155–170; sequence NDNASTPGLTDSSAGT. The interval 161–223 is linker; sequence PGLTDSSAGT…NDLIAESNKY (63 aa). [2Fe-2S] cluster contacts are provided by C231, C243, C246, and C248. Positions 231 to 248 are fe-S binding site A; that stretch reads CELPNGKKRKKACKDCTC. [4Fe-4S] cluster is bound by residues C313, C316, C324, and C327. 2 consecutive short sequence motifs (cx2C motif) follow at residues 313–316 and 324–327; these read CGSC and CDGC. Residues 313–327 are fe-S binding site B; that stretch reads CGSCSLGDAFRCDGC.

The protein belongs to the anamorsin family. In terms of assembly, monomer. Interacts with TAH18. Interacts with MIA40. [2Fe-2S] cluster is required as a cofactor. It depends on [4Fe-4S] cluster as a cofactor.

It localises to the cytoplasm. Its subcellular location is the mitochondrion intermembrane space. Functionally, component of the cytosolic iron-sulfur (Fe-S) protein assembly (CIA) machinery required for the maturation of extramitochondrial Fe-S proteins. Part of an electron transfer chain functioning in an early step of cytosolic Fe-S biogenesis, facilitating the de novo assembly of a [4Fe-4S] cluster on the scaffold complex CFD1-NBP35. Electrons are transferred to DRE2 from NADPH via the FAD- and FMN-containing protein TAH18. TAH18-DRE2 are also required for the assembly of the diferric tyrosyl radical cofactor of ribonucleotide reductase (RNR), probably by providing electrons for reduction during radical cofactor maturation in the catalytic small subunit RNR2. The polypeptide is Fe-S cluster assembly protein DRE2 (Candida tropicalis (strain ATCC MYA-3404 / T1) (Yeast)).